The sequence spans 461 residues: MIRAAFACLAATVVVAGWWTPPAWAIGPPVVDAAAQPPSGDPGPVAPMEQRGACSVSGVIPGTDPGVPTPSQTMLNLPAAWQFSRGEGQLVAIIDTGVQPGPRLPNVDAGGDFVESTDGLTDCDGHGTLVAGIVAGQPGNDGFSGVAPAARLLSIRAMSTKFSPRTSGGDPQLAQATLDVAVLAGAIVHAADLGAKVINVSTITCLPADRMVDQAALGAAIRYAAVDKDAVIVAAAGNTGASGSVSASCDSNPLTDLSRPDDPRNWAGVTSVSIPSWWQPYVLSVASLTSAGQPSKFSMPGPWVGIAAPGENIASVSNSGDGALANGLPDAHQKLVALSGTSYAAGYVSGVAALVRSRYPGLNATEVVRRLTATAHRGARESSNIVGAGNLDAVAALTWQLPAEPGGGAAPAKPVADPPVPAPKDTTPRNVAFAGAAALSVLVGLTAATVAIARRRREPTE.

Residues 1-25 (MIRAAFACLAATVVVAGWWTPPAWA) form the signal peptide. One can recognise a Peptidase S8 domain in the interval 64-397 (DPGVPTPSQT…AGNLDAVAAL (334 aa)). Residues D95, H126, and S342 each act as charge relay system in the active site. A helical transmembrane segment spans residues 432-452 (AFAGAAALSVLVGLTAATVAI).

The protein belongs to the peptidase S8 family.

It localises to the cell membrane. The polypeptide is Mycosin-3 (Mycobacterium tuberculosis (strain ATCC 25618 / H37Rv)).